A 1183-amino-acid polypeptide reads, in one-letter code: Polyphosphatidylinositol phosphatase INP52 (1183 aa).

Over residues 133-153 the composition is skewed to low complexity; that stretch reads PPSISTHSSRSSLRSSSSRSL. The tract at residues 133-161 is disordered; sequence PPSISTHSSRSSLRSSSSRSLNAQEQAPK. Residue serine 152 is modified to Phosphoserine. One can recognise an SAC domain in the interval 167–507; that stretch reads LRKLLSNGSF…GDQISQIYTG (341 aa). Serine 522 carries the post-translational modification Phosphoserine. The segment covering 955 to 968 has biased composition (low complexity); sequence SPLLSGPSPQPSVV. The tract at residues 955–1183 is disordered; it reads SPLLSGPSPQ…VHPLKPCDPN (229 aa). Phosphoserine occurs at positions 1005 and 1016. Threonine 1032 is subject to Phosphothreonine. Polar residues-rich tracts occupy residues 1046–1057, 1082–1100, and 1130–1145; these read KPVSLQKSSSEL, STAPDEISTSTKNSGVSTT, and KLNTSQEHSIKVSPSN. Residue serine 1095 is modified to Phosphoserine.

The protein belongs to the synaptojanin family. This sequence in the central section; belongs to the inositol 1,4,5-trisphosphate 5-phosphatase family. In terms of assembly, interacts (via SAC domain) with BSP1; the interaction is direct. Interacts with ABP1.

It localises to the cytoplasm. The protein localises to the cytoskeleton. Its subcellular location is the actin patch. It catalyses the reaction a 1,2-diacyl-sn-glycero-3-phospho-(1D-myo-inositol-4,5-bisphosphate) + H2O = a 1,2-diacyl-sn-glycero-3-phospho-(1D-myo-inositol 4-phosphate) + phosphate. Its function is as follows. Dephosphorylates a number of phosphatidylinositols (PIs) like phosphatidylinositol 4,5-bisphosphate (PtdIns(4,5)P2), but also phosphatidylinositol 3-phosphate (PtdIns(3)P), phosphatidylinositol 4-phosphate (PtdIns(4)P), and phosphatidylinositol 3,5-bisphosphate (PtdIns(3,5)P2). Controls the cellular levels and subcellular distribution of phosphatidylinositol 3-phosphate and phosphatidylinositol 4,5-bisphosphate. Specifically functions within the early endocytic pathway and actin organization. The chain is Polyphosphatidylinositol phosphatase INP52 from Saccharomyces cerevisiae (strain ATCC 204508 / S288c) (Baker's yeast).